The chain runs to 276 residues: Phosphonates import ATP-binding protein PhnC (276 aa).

In terms of domain architecture, ABC transporter spans 5-253 (IRVERLNKTF…LLNDLYGADL (249 aa)). 37-44 (GASGSGKS) contacts ATP.

The protein belongs to the ABC transporter superfamily. Phosphonates importer (TC 3.A.1.9.1) family. As to quaternary structure, the complex is composed of two ATP-binding proteins (PhnC), two transmembrane proteins (PhnE) and a solute-binding protein (PhnD).

The protein localises to the cell inner membrane. It catalyses the reaction phosphonate(out) + ATP + H2O = phosphonate(in) + ADP + phosphate + H(+). Its function is as follows. Part of the ABC transporter complex PhnCDE involved in phosphonates import. Responsible for energy coupling to the transport system. The chain is Phosphonates import ATP-binding protein PhnC from Stutzerimonas stutzeri (Pseudomonas stutzeri).